Consider the following 402-residue polypeptide: Putative F-box/kelch-repeat protein At1g61540 (402 aa).

An F-box domain is found at 24–70 (PISIMSLPYDLLLNCFSLVSRLYYPTLSLVSKTFRSIITSRELYEIR). 3 Kelch repeats span residues 135-189 (NIYK…CEVD), 191-240 (KIYI…EVKS), and 246-293 (KIYM…VVDN).

The polypeptide is Putative F-box/kelch-repeat protein At1g61540 (Arabidopsis thaliana (Mouse-ear cress)).